The sequence spans 115 residues: Pancreatic progenitor cell differentiation and proliferation factor B (115 aa).

Residues 21 to 48 (IGSTSSSSSCGSSEYSGEVIPHHPGLPK) form a disordered region. The span at 22 to 37 (GSTSSSSSCGSSEYSG) shows a compositional bias: low complexity.

This sequence belongs to the PPDPF family.

Probable regulator of exocrine pancreas development. The polypeptide is Pancreatic progenitor cell differentiation and proliferation factor B (ppdpfb) (Danio rerio (Zebrafish)).